Consider the following 82-residue polypeptide: Proline, histidine and glycine-rich protein 1 (82 aa).

Residues 20 to 82 (HCGPPPGHGP…PGHPPPGPHH (63 aa)) form a disordered region.

This is Proline, histidine and glycine-rich protein 1 (PHGR1) from Homo sapiens (Human).